The sequence spans 880 residues: MKQLTGAQIRQMFLDFFQEKGHAVEPSASLVPHEDPSLLWINSGVATLKKYFDGRVIPQNPRITNAQKSIRTNDIENVGKTARHHTFFEMLGNFSIGDYFKEEAITWAWEFLTSDKWIGFDKELLSVTIHPEDEEAFTIWNEKMGVPKERIIRLEENFWDIGEGPSGPNTEIFYDRGEAYGNDFSDPELYPGGENERYLEVWNLVFSQFNHNPDGSYTPLPKKNIDTGMGLERMTSIVQDVPTNFDTDLFMPMIGATETISGEKYRNGDLEKDMAFKVIADHIRTVTFAVGDGALPSNEGRGYVLRRLLRRAVRYSKKLNINRPFMFELVPVVGEVMKDFYPEVLEKKDFIAKVVKNEEERFHETLHDGEAILAEVIAKAKEEKTTVISGVDAFRLYDTYGFPIELTEEYAEEAGMTVDHEGFENEMEKQRERARAARQDVDSMQVQGGVLGEIKVASEFVGYGTVATESNVVALVKNGEYTDSLQAGEEGQLILDVTPFYAESGGQIADRGYLLADGVKVLVKDVQKAPNGQNLHKVVVEEGTLTKDAAVKAIIDTKNRSSVVKNHTATHLLHQALKDVLGTHVNQAGSLVTSERLRFDFSHFGQVQADELEKIERMVNEKIWESIDVEISQKAIEEAKEMGAMALFGEKYGDVVRVVQVGDYSLELCGGCHVDNTASIGIFKIVAESGIGAGTRRIEAVTGKSAYELMNDQVGLLKEAAGKMKTNPKDILTRVDGLFAEVKQLQKENESLAAKLSNIEAGNLTDSVMTVDGVNVLAAKVNVADMNNLRTMMDDLKNKLESAVVVLASVNDDKVNILAGVTKDLISQGYHAGKLVKEVASRCGGGGGGRPDMAQAGGKNPAQVEEALAFVQEYVKSVSK.

Residues histidine 567, histidine 571, cysteine 669, and histidine 673 each coordinate Zn(2+).

This sequence belongs to the class-II aminoacyl-tRNA synthetase family. Requires Zn(2+) as cofactor.

The protein resides in the cytoplasm. The catalysed reaction is tRNA(Ala) + L-alanine + ATP = L-alanyl-tRNA(Ala) + AMP + diphosphate. Functionally, catalyzes the attachment of alanine to tRNA(Ala) in a two-step reaction: alanine is first activated by ATP to form Ala-AMP and then transferred to the acceptor end of tRNA(Ala). Also edits incorrectly charged Ser-tRNA(Ala) and Gly-tRNA(Ala) via its editing domain. This Bacillus cereus (strain ATCC 14579 / DSM 31 / CCUG 7414 / JCM 2152 / NBRC 15305 / NCIMB 9373 / NCTC 2599 / NRRL B-3711) protein is Alanine--tRNA ligase.